A 142-amino-acid chain; its full sequence is Large ribosomal subunit protein uL13 (142 aa).

It belongs to the universal ribosomal protein uL13 family. Part of the 50S ribosomal subunit.

This protein is one of the early assembly proteins of the 50S ribosomal subunit, although it is not seen to bind rRNA by itself. It is important during the early stages of 50S assembly. This is Large ribosomal subunit protein uL13 from Shigella boydii serotype 18 (strain CDC 3083-94 / BS512).